The primary structure comprises 325 residues: NADH-quinone oxidoreductase subunit H (325 aa).

The next 8 membrane-spanning stretches (helical) occupy residues 11 to 31 (ILLS…CGAF), 81 to 101 (VIFT…FAIV), 114 to 134 (IGIL…LFAG), 154 to 174 (LSYE…AGSF), 186 to 206 (LWNV…GVAV), 237 to 257 (FFVG…TLFF), 265 to 285 (LPPF…FILI), and 304 to 324 (VCLP…LWQA).

This sequence belongs to the complex I subunit 1 family. As to quaternary structure, NDH-1 is composed of 13 different subunits. Subunits NuoA, H, J, K, L, M, N constitute the membrane sector of the complex.

Its subcellular location is the cell inner membrane. The catalysed reaction is a quinone + NADH + 5 H(+)(in) = a quinol + NAD(+) + 4 H(+)(out). Its function is as follows. NDH-1 shuttles electrons from NADH, via FMN and iron-sulfur (Fe-S) centers, to quinones in the respiratory chain. The immediate electron acceptor for the enzyme in this species is believed to be ubiquinone. Couples the redox reaction to proton translocation (for every two electrons transferred, four hydrogen ions are translocated across the cytoplasmic membrane), and thus conserves the redox energy in a proton gradient. This subunit may bind ubiquinone. In Klebsiella pneumoniae (strain 342), this protein is NADH-quinone oxidoreductase subunit H.